The sequence spans 350 residues: Adenine deaminase (350 aa).

H24, H26, and H207 together coordinate Zn(2+). The active-site Proton donor is the E210. Position 288 (D288) interacts with Zn(2+). A substrate-binding site is contributed by D289.

It belongs to the metallo-dependent hydrolases superfamily. Adenosine and AMP deaminases family. Adenine deaminase type 2 subfamily. Zn(2+) is required as a cofactor.

The catalysed reaction is adenine + H2O + H(+) = hypoxanthine + NH4(+). Its function is as follows. Catalyzes the hydrolytic deamination of adenine to hypoxanthine. Plays an important role in the purine salvage pathway and in nitrogen catabolism. The chain is Adenine deaminase from Paraburkholderia phytofirmans (strain DSM 17436 / LMG 22146 / PsJN) (Burkholderia phytofirmans).